A 121-amino-acid polypeptide reads, in one-letter code: UPF0102 protein Dhaf_3740 (121 aa).

It belongs to the UPF0102 family.

The protein is UPF0102 protein Dhaf_3740 of Desulfitobacterium hafniense (strain DSM 10664 / DCB-2).